We begin with the raw amino-acid sequence, 662 residues long: Probable protein phosphatase CG10417 (662 aa).

The 542-residue stretch at 23–564 folds into the PPM-type phosphatase domain; it reads AVGASSMQGW…DNMTAVIVQF (542 aa). The Mn(2+) site is built by Asp-57 and Gly-58. 2 disordered regions span residues 219 to 275 and 288 to 374; these read DGVA…FKHT and GSND…DEDQ. Composition is skewed to polar residues over residues 238-252, 261-275, and 288-319; these read DSNTTTSINDLSTKN, NDQNEGSNGTDFKHT, and GSNDMTELNQSSKNEFTNSSTSKEFERNINSS. Ser-289 and Ser-306 each carry phosphoserine. The segment covering 320–334 has biased composition (acidic residues); that stretch reads QDDEFTDDDADYEEN. The segment covering 337–347 has biased composition (polar residues); sequence VKSPDTSSAES. Residues 349 to 374 are compositionally biased toward acidic residues; that stretch reads DCTENDDDGDEDGNEDSDEEETDEDQ. Positions 506 and 555 each coordinate Mn(2+). Residues 591-609 are compositionally biased toward polar residues; the sequence is VSHSLNDQSASKRCASQNA. Positions 591 to 662 are disordered; that stretch reads VSHSLNDQSA…KEVTIIVSSS (72 aa). A phosphoserine mark is found at Ser-592, Ser-594, and Ser-599. Basic and acidic residues predominate over residues 616–637; the sequence is LEKNNSKRLKTDLEQENIKDRT. Thr-637 is modified (phosphothreonine). 2 positions are modified to phosphoserine: Ser-639 and Ser-641.

It belongs to the PP2C family. It depends on Mg(2+) as a cofactor. Mn(2+) serves as cofactor.

It carries out the reaction O-phospho-L-seryl-[protein] + H2O = L-seryl-[protein] + phosphate. The catalysed reaction is O-phospho-L-threonyl-[protein] + H2O = L-threonyl-[protein] + phosphate. This is Probable protein phosphatase CG10417 from Drosophila melanogaster (Fruit fly).